A 1368-amino-acid chain; its full sequence is MQYSFTEKKRIRKSFAKRPIVHQVPFLLATQLESFSTFLQADTSSTQRKPEGLQAAFTSVFPIVSHNGFARLEFVSYMLSPPAFNIKECQQRGLTYCSALRAKVRLVLLDKESPSKPVVKEVKEQEVYMGEIPLMTPTGSFVINGTERVIVSQLHRSPGVFFEHDKGKTHSSGKLLFSARIIPYRGSWLDFEFDPKDVLYFRVDRRRKMPVTILLKAIGLTPEQILANFFVFDNFTLMPEGAQMEFVPERLRGEVARFDITDRDGNVIVQKDKRINAKHIRDLDNAKTKFISVPEDYLLGRVLAKNVVDGDTGEVIANANDEITETVLEKLRESKIKDIQTLYTNDLDQGPYISSTLRIDETADKMAARIAIYRMMRPGEPPTEEAVEALFNRLFYSEDAYDLSKVGRMKFNRRVGRDEIVGPMTLQDDDILATIKILVELRNGKGEVDDIDHLGNRRVRCVGELAENQFRAGLVRVERAVKERLGQAESENLMPHDLINSKPISSAIREFFGSSQLSQFMDQTNPLSEITHKRRVSALGPGGLTRERAGFEVRDVHPTHYGRVCPIETPEGPNIGLINSLALYAHLNEYGFLETPYRKVVDSKVTDQIDYLSAIEEGRYVIAQANAAVAEDGSLTDELVSSREAGETLMVTPDRIQYMDVAPSQIVSVAASLIPFLEHDDANRALMGSNMQRQAVPCLRPEKAVVGTGIERTVAVDSGTTVQAFRGGVVDYVDAGRMVIRVNDDEAAAGETGVDIYNLIKYTRSNQNTNINQRPIVKVGDIVSRGDVLADGASTDLGELALGQNMLVAFMPWNGYNFEDSILISEKVVADDRYTSIHIEELNVVARDTKLGPEEITRDISNLAEVQLGRLDESGIVYIGAEVEAGDVLVGKVTPKGETQLTPEEKLLRAIFGEKASDVKDTSLRVPSGMSGTVIDVQVFTREGIQRDKRAQQIIDDELKRYRLDLNDQLRIVEGDAFQRLARMLDGKVANGGPKKLAKGTKIEQAYLQDLDHYHWFDIRLADEEAAAQLEAIKDSIEQKRHQFDLAFEEKRKKLTQGDELPPGVLKMVKVYLAVKRRLQPGDKMAGRHGNKGVVSKIVPIEDMPYMADGRPADVVLNPLGVPSRMNVGQVLEVHLGWAAKGLGWRIGEMLQRQAKIAELREFLTKIYNESGRAEELDSFTDDEIVELAKNLREGVPFATPVFDGATEEEMSRALDLAFPDDIAKNLGMTPSKNQVRLYDGRTGEMFERTVTVGYMHYLKLHHLVDDKMHARSTGPYSLVTQQPLGGKAQFGGQRFGEMEVWALEAYGASYVLQEMLTVKSDDVTGRTKVYENLVKGDHVIDAGMPESFNVLVKEIRSLGIDIDLDRN.

The protein belongs to the RNA polymerase beta chain family. The RNAP catalytic core consists of 2 alpha, 1 beta, 1 beta' and 1 omega subunit. When a sigma factor is associated with the core the holoenzyme is formed, which can initiate transcription.

The catalysed reaction is RNA(n) + a ribonucleoside 5'-triphosphate = RNA(n+1) + diphosphate. In terms of biological role, DNA-dependent RNA polymerase catalyzes the transcription of DNA into RNA using the four ribonucleoside triphosphates as substrates. The protein is DNA-directed RNA polymerase subunit beta of Paraburkholderia phytofirmans (strain DSM 17436 / LMG 22146 / PsJN) (Burkholderia phytofirmans).